A 493-amino-acid polypeptide reads, in one-letter code: 6-phosphogluconate dehydrogenase, decarboxylating (493 aa).

NADP(+) contacts are provided by residues 12–17 (GLAVMG), 35–37 (NRT), 77–79 (VKA), and Asn-105. Substrate contacts are provided by residues Asn-105 and 131–133 (SGG). Lys-187 serves as the catalytic Proton acceptor. 190 to 191 (HN) is a binding site for substrate. The active-site Proton donor is the Glu-194. The substrate site is built by Tyr-195, Lys-266, Arg-293, Arg-456, and His-462.

The protein belongs to the 6-phosphogluconate dehydrogenase family. Homodimer.

The enzyme catalyses 6-phospho-D-gluconate + NADP(+) = D-ribulose 5-phosphate + CO2 + NADPH. It participates in carbohydrate degradation; pentose phosphate pathway; D-ribulose 5-phosphate from D-glucose 6-phosphate (oxidative stage): step 3/3. Catalyzes the oxidative decarboxylation of 6-phosphogluconate to ribulose 5-phosphate and CO(2), with concomitant reduction of NADP to NADPH. In Dictyostelium discoideum (Social amoeba), this protein is 6-phosphogluconate dehydrogenase, decarboxylating (gnd).